Consider the following 116-residue polypeptide: Putative membrane protein insertion efficiency factor (116 aa).

It belongs to the UPF0161 family.

It is found in the cell inner membrane. Could be involved in insertion of integral membrane proteins into the membrane. The chain is Putative membrane protein insertion efficiency factor from Bartonella tribocorum (strain CIP 105476 / IBS 506).